The chain runs to 711 residues: Ribosomal RNA large subunit methyltransferase K/L (711 aa).

The 112-residue stretch at 43–154 (LGYRITLWSR…RGQITIGLNF (112 aa)) folds into the THUMP domain.

This sequence belongs to the methyltransferase superfamily. RlmKL family.

It localises to the cytoplasm. The enzyme catalyses guanosine(2445) in 23S rRNA + S-adenosyl-L-methionine = N(2)-methylguanosine(2445) in 23S rRNA + S-adenosyl-L-homocysteine + H(+). The catalysed reaction is guanosine(2069) in 23S rRNA + S-adenosyl-L-methionine = N(2)-methylguanosine(2069) in 23S rRNA + S-adenosyl-L-homocysteine + H(+). In terms of biological role, specifically methylates the guanine in position 2445 (m2G2445) and the guanine in position 2069 (m7G2069) of 23S rRNA. The polypeptide is Ribosomal RNA large subunit methyltransferase K/L (Shewanella woodyi (strain ATCC 51908 / MS32)).